A 116-amino-acid polypeptide reads, in one-letter code: UPF0482 protein PC1_2049 (116 aa).

The first 31 residues, M1–A31, serve as a signal peptide directing secretion.

Belongs to the UPF0482 family.

The chain is UPF0482 protein PC1_2049 from Pectobacterium carotovorum subsp. carotovorum (strain PC1).